Here is a 395-residue protein sequence, read N- to C-terminus: [LysW]-aminoadipate semialdehyde transaminase (395 aa).

Pyridoxal 5'-phosphate contacts are provided by residues 113 to 114 and Phe-140; that span reads GT. Arg-143 serves as a coordination point for substrate. 225 to 228 provides a ligand contact to pyridoxal 5'-phosphate; sequence DEIQ. An N6-(pyridoxal phosphate)lysine modification is found at Lys-254. Residue Thr-282 coordinates substrate. Thr-283 serves as a coordination point for pyridoxal 5'-phosphate.

It belongs to the class-III pyridoxal-phosphate-dependent aminotransferase family. LysJ subfamily. As to quaternary structure, homodimer. The cofactor is pyridoxal 5'-phosphate.

It is found in the cytoplasm. The catalysed reaction is [amino-group carrier protein]-C-terminal-gamma-(L-lysyl)-L-glutamate + 2-oxoglutarate = [amino-group carrier protein]-C-terminal-N-(1-carboxy-5-oxopentan-1-yl)-L-glutamine + L-glutamate. It functions in the pathway amino-acid biosynthesis; L-lysine biosynthesis via AAA pathway; L-lysine from L-alpha-aminoadipate (Thermus route): step 4/5. In terms of biological role, catalyzes the transfer of the amino group of L-glutamate to [LysW]-aminoadipate 6-semialdehyde, generating [LysW]-gamma-L-lysine. This is [LysW]-aminoadipate semialdehyde transaminase from Thermus thermophilus (strain ATCC 27634 / DSM 579 / HB8).